Here is a 441-residue protein sequence, read N- to C-terminus: ATP-dependent RNA helicase sub2 (441 aa).

Low complexity predominate over residues 19-29; it reads DAAATTAAPAA. Positions 19–43 are disordered; that stretch reads DAAATTAAPAANGAQDKKGDLTVSG. The short motif at 58–86 is the Q motif element; the sequence is TGFRDFLLKGELLRAITDCGFEHPSEVQQ. The Helicase ATP-binding domain occupies 89-264; that stretch reads IPTAILNVDV…KKFMRNPLEV (176 aa). 102–109 contributes to the ATP binding site; it reads AKSGLGKT. The short motif at 211-214 is the DEAD box element; that stretch reads DECD. Positions 276-437 constitute a Helicase C-terminal domain; sequence GLQQYYIKLS…EYPEGGVDSS (162 aa).

It belongs to the DEAD box helicase family. DECD subfamily.

Its subcellular location is the nucleus. It carries out the reaction ATP + H2O = ADP + phosphate + H(+). ATP-binding RNA helicase involved in transcription elongation and required for the export of mRNA out of the nucleus. SUB2 also plays a role in pre-mRNA splicing and spliceosome assembly. May be involved in rDNA and telomeric silencing, and maintenance of genome integrity. This chain is ATP-dependent RNA helicase sub2 (sub2), found in Neosartorya fischeri (strain ATCC 1020 / DSM 3700 / CBS 544.65 / FGSC A1164 / JCM 1740 / NRRL 181 / WB 181) (Aspergillus fischerianus).